The chain runs to 117 residues: Large ribosomal subunit protein bL20 (117 aa).

It belongs to the bacterial ribosomal protein bL20 family.

Its function is as follows. Binds directly to 23S ribosomal RNA and is necessary for the in vitro assembly process of the 50S ribosomal subunit. It is not involved in the protein synthesizing functions of that subunit. The protein is Large ribosomal subunit protein bL20 of Campylobacter jejuni subsp. jejuni serotype O:6 (strain 81116 / NCTC 11828).